The primary structure comprises 409 residues: Elongation factor Tu, chloroplastic (409 aa).

A tr-type G domain is found at 10–214; that stretch reads KPHVNIGTIG…AVDTYIPTPE (205 aa). The interval 19–26 is G1; sequence GHVDHGKT. Residue 19-26 participates in GTP binding; the sequence is GHVDHGKT. Residue Thr26 participates in Mg(2+) binding. The G2 stretch occupies residues 60–64; the sequence is GITIN. The G3 stretch occupies residues 81-84; the sequence is DCPG. Residues 81–85 and 136–139 each bind GTP; these read DCPGH and NKED. A G4 region spans residues 136–139; sequence NKED. Positions 174–176 are G5; the sequence is SAL.

The protein belongs to the TRAFAC class translation factor GTPase superfamily. Classic translation factor GTPase family. EF-Tu/EF-1A subfamily.

It is found in the plastid. The protein localises to the chloroplast. The enzyme catalyses GTP + H2O = GDP + phosphate + H(+). Functionally, GTP hydrolase that promotes the GTP-dependent binding of aminoacyl-tRNA to the A-site of ribosomes during protein biosynthesis. This chain is Elongation factor Tu, chloroplastic (tufA), found in Porphyra purpurea (Red seaweed).